A 439-amino-acid chain; its full sequence is 23S rRNA (uracil(1939)-C(5))-methyltransferase RlmD (439 aa).

The TRAM domain maps to Lys10–Gln68. Residues Cys81, Cys87, Cys90, and Cys169 each coordinate [4Fe-4S] cluster. S-adenosyl-L-methionine is bound by residues Gln273, Phe302, Asn307, Glu323, Asp350, and Asp371. Cys397 acts as the Nucleophile in catalysis.

Belongs to the class I-like SAM-binding methyltransferase superfamily. RNA M5U methyltransferase family. RlmD subfamily.

The catalysed reaction is uridine(1939) in 23S rRNA + S-adenosyl-L-methionine = 5-methyluridine(1939) in 23S rRNA + S-adenosyl-L-homocysteine + H(+). Catalyzes the formation of 5-methyl-uridine at position 1939 (m5U1939) in 23S rRNA. The protein is 23S rRNA (uracil(1939)-C(5))-methyltransferase RlmD of Aeromonas salmonicida (strain A449).